The sequence spans 510 residues: MIWHVQNENFILDSTRIFMKAFHLLLFDGSLIFPECILIFGLILLLMIDSTSDQKDIPWLYFISSTSLVMSITSLLFRWREEPMISFSGNFQTNNFNEIFQFLILLCSTLCIPLSVEYIECTEMAITEFLLFVLTATIGGMFLCGANDLITIFVAPECFSLCSYLLSGYTKKDVRSNEATMKYLLMGGASSSILVHGFSWLYGSSGGEIELQEIVNGLINTQMYNSPGISIALIFITVGIGFKLSPAPSHQWTPDVYEGSPTPVVAFLSVTSKVAASASATRIFDIPFYFSSNEWHLLLEILAILSMILGNLIAITQTSMKRMLAYSSIGQIGYVIIGIIVGDSNDGYASMITYMLFYISMNLGTFACIVLFGLRTGTENIRDYAGLYTKDPFLALSLALCLLSLGGLPPLAGFFGKLYLFWCGWQAGLYFLVLIGLLTSVVSIYYYLKIIKLLMTGRNQEITPHVRNYRRSPLRSNNSIELSMIVCVIASTIPGISMNPIIAIAQDTLF.

13 consecutive transmembrane segments (helical) span residues 24-44, 57-77, 99-119, 124-144, 149-169, 183-203, 227-247, 295-315, 323-343, 354-374, 395-415, 418-438, and 484-504; these read LLLF…GLIL, IPWL…SLLF, IFQF…VEYI, MAIT…MFLC, LITI…LSGY, YLLM…WLYG, PGIS…LSPA, WHLL…LIAI, MLAY…IVGD, YMLF…LFGL, ALSL…AGFF, LYLF…IGLL, and MIVC…IIAI.

It belongs to the complex I subunit 2 family. As to quaternary structure, NDH is composed of at least 16 different subunits, 5 of which are encoded in the nucleus.

It localises to the plastid. It is found in the chloroplast thylakoid membrane. It catalyses the reaction a plastoquinone + NADH + (n+1) H(+)(in) = a plastoquinol + NAD(+) + n H(+)(out). It carries out the reaction a plastoquinone + NADPH + (n+1) H(+)(in) = a plastoquinol + NADP(+) + n H(+)(out). In terms of biological role, NDH shuttles electrons from NAD(P)H:plastoquinone, via FMN and iron-sulfur (Fe-S) centers, to quinones in the photosynthetic chain and possibly in a chloroplast respiratory chain. The immediate electron acceptor for the enzyme in this species is believed to be plastoquinone. Couples the redox reaction to proton translocation, and thus conserves the redox energy in a proton gradient. The sequence is that of NAD(P)H-quinone oxidoreductase subunit 2 B, chloroplastic from Lactuca sativa (Garden lettuce).